Reading from the N-terminus, the 61-residue chain is Small ribosomal subunit protein uS14 (61 aa).

Residues Cys24, Cys27, Cys40, and Cys43 each contribute to the Zn(2+) site.

Belongs to the universal ribosomal protein uS14 family. Zinc-binding uS14 subfamily. In terms of assembly, part of the 30S ribosomal subunit. Contacts proteins S3 and S10. The cofactor is Zn(2+).

In terms of biological role, binds 16S rRNA, required for the assembly of 30S particles and may also be responsible for determining the conformation of the 16S rRNA at the A site. In Mycobacterium avium (strain 104), this protein is Small ribosomal subunit protein uS14.